The sequence spans 155 residues: Ribosome maturation factor RimP (155 aa).

Belongs to the RimP family.

It is found in the cytoplasm. Functionally, required for maturation of 30S ribosomal subunits. This is Ribosome maturation factor RimP from Synechococcus sp. (strain CC9902).